A 319-amino-acid polypeptide reads, in one-letter code: Large ribosomal subunit protein uL10 (319 aa).

Positions 286 to 295 (ADSGAAAPSA) are enriched in low complexity. The tract at residues 286 to 319 (ADSGAAAPSAAKEEEKKEEPEEESDGDLGMSLFD) is disordered.

Belongs to the universal ribosomal protein uL10 family. In terms of assembly, P0 forms a pentameric complex by interaction with dimers of P1 and P2. Interacts with NSF. Phosphorylated. As to expression, highly expressed in stems, inflorescences and immature seeds (at protein level). Expressed in leaves and mature seeds (at protein level).

Ribosomal protein P0 is the functional equivalent of E.coli protein L10. This Oryza sativa subsp. japonica (Rice) protein is Large ribosomal subunit protein uL10.